The chain runs to 113 residues: uncharacterized protein (113 aa).

An N-terminal signal peptide occupies residues M1 to A20.

This is an uncharacterized protein from Escherichia coli (strain K12).